Here is a 162-residue protein sequence, read N- to C-terminus: Glycine cleavage system H protein, mitochondrial (162 aa).

The transit peptide at 1-31 directs the protein to the mitochondrion; it reads MALRMWASSTANALRLSSATRPHFSPLSRCF. The 83-residue stretch at 53 to 135 folds into the Lipoyl-binding domain; that stretch reads VATIGITDHA…YEDGWMIKVK (83 aa). Position 94 is an N6-lipoyllysine (Lys-94).

This sequence belongs to the GcvH family. As to quaternary structure, the glycine cleavage system is composed of four proteins: P, T, L and H. Requires (R)-lipoate as cofactor.

It localises to the mitochondrion. Functionally, the glycine cleavage system catalyzes the degradation of glycine. The H protein shuttles the methylamine group of glycine from the P protein to the T protein. This Flaveria anomala (Yellowtops) protein is Glycine cleavage system H protein, mitochondrial (GDCSH).